The primary structure comprises 878 residues: E3 ubiquitin-protein ligase SH3RF3 (878 aa).

Residues 19–40 (RGEGEDRQGEQQRGAQARTEED) form a disordered region. The segment at 52–93 (CSVCLERLDTTAKVLPCQHTFCRRCLESIVCSRHELRCPECR) adopts an RING-type zinc-finger fold. The tract at residues 120-145 (PRTGASPGSSPPARPGPGTFSALAGG) is disordered. SH3 domains lie at 187 to 246 (SQLP…CVRP) and 249 to 312 (QALP…LNDS). The interaction with RAC1 stretch occupies residues 364 to 433 (RVDSKKNAKK…TVPTQDSSSA (70 aa)). Ser-395 bears the Phosphoserine mark. One can recognise an SH3 3 domain in the interval 458–519 (LPLNVYLALY…PGNYVTPVSR (62 aa)). Disordered regions lie at residues 574–659 (QHPA…CPRP) and 688–758 (PISG…MGPE). Composition is skewed to polar residues over residues 590–609 (AQPT…THAS), 618–633 (ATVS…SRLP), 643–653 (ASPQHGQQSPA), and 690–699 (SGLSTPSLIN). Basic and acidic residues predominate over residues 703–716 (KPDDKKNEKKEKKS). Over residues 741–752 (HDPQSAMDTSLQ) the composition is skewed to polar residues. The residue at position 792 (Ser-792) is a Phosphoserine. The region spanning 819 to 878 (LPRERYRVVVSYPPQSEAEIELKEGDIVFVHKKHEDGWFKGTLQRNGRTGLFPGSFVESF) is the SH3 4 domain.

Belongs to the SH3RF family. In terms of assembly, interacts (via SH3 domain 3) with PAK2. Interacts with RAC1 (GTP-bound form). Post-translationally, autoubiquitinated.

The catalysed reaction is S-ubiquitinyl-[E2 ubiquitin-conjugating enzyme]-L-cysteine + [acceptor protein]-L-lysine = [E2 ubiquitin-conjugating enzyme]-L-cysteine + N(6)-ubiquitinyl-[acceptor protein]-L-lysine.. It functions in the pathway protein modification; protein ubiquitination. Has E3 ubiquitin-protein ligase activity. This Mus musculus (Mouse) protein is E3 ubiquitin-protein ligase SH3RF3 (Sh3rf3).